The sequence spans 626 residues: Endoglucanase 19 (626 aa).

An N-terminal signal peptide occupies residues 1–23 (MGSRTTISILVVLLLGLVQLAIS). Aspartate 79 acts as the Nucleophile in catalysis. Active-site residues include histidine 412, aspartate 464, and glutamate 473. A disordered region spans residues 515-536 (APVPQRKPTKPPAASSPSPITI). The segment covering 526-536 (PAASSPSPITI) has biased composition (low complexity). 2 N-linked (GlcNAc...) asparagine glycosylation sites follow: asparagine 560 and asparagine 622.

It belongs to the glycosyl hydrolase 9 (cellulase E) family.

The protein localises to the secreted. It carries out the reaction Endohydrolysis of (1-&gt;4)-beta-D-glucosidic linkages in cellulose, lichenin and cereal beta-D-glucans.. The sequence is that of Endoglucanase 19 from Arabidopsis thaliana (Mouse-ear cress).